Consider the following 72-residue polypeptide: NAD(P)H-quinone oxidoreductase subunit O (72 aa).

The protein belongs to the complex I NdhO subunit family. As to quaternary structure, NDH-1 can be composed of about 15 different subunits; different subcomplexes with different compositions have been identified which probably have different functions.

Its subcellular location is the cellular thylakoid membrane. The catalysed reaction is a plastoquinone + NADH + (n+1) H(+)(in) = a plastoquinol + NAD(+) + n H(+)(out). The enzyme catalyses a plastoquinone + NADPH + (n+1) H(+)(in) = a plastoquinol + NADP(+) + n H(+)(out). Functionally, NDH-1 shuttles electrons from an unknown electron donor, via FMN and iron-sulfur (Fe-S) centers, to quinones in the respiratory and/or the photosynthetic chain. The immediate electron acceptor for the enzyme in this species is believed to be plastoquinone. Couples the redox reaction to proton translocation, and thus conserves the redox energy in a proton gradient. Cyanobacterial NDH-1 also plays a role in inorganic carbon-concentration. In Synechococcus elongatus (strain ATCC 33912 / PCC 7942 / FACHB-805) (Anacystis nidulans R2), this protein is NAD(P)H-quinone oxidoreductase subunit O.